A 306-amino-acid chain; its full sequence is UDP-3-O-acyl-N-acetylglucosamine deacetylase (306 aa).

Histidine 79, histidine 238, and aspartate 242 together coordinate Zn(2+). The Proton donor role is filled by histidine 265.

Belongs to the LpxC family. The cofactor is Zn(2+).

The enzyme catalyses a UDP-3-O-[(3R)-3-hydroxyacyl]-N-acetyl-alpha-D-glucosamine + H2O = a UDP-3-O-[(3R)-3-hydroxyacyl]-alpha-D-glucosamine + acetate. The protein operates within glycolipid biosynthesis; lipid IV(A) biosynthesis; lipid IV(A) from (3R)-3-hydroxytetradecanoyl-[acyl-carrier-protein] and UDP-N-acetyl-alpha-D-glucosamine: step 2/6. Catalyzes the hydrolysis of UDP-3-O-myristoyl-N-acetylglucosamine to form UDP-3-O-myristoylglucosamine and acetate, the committed step in lipid A biosynthesis. This Shewanella sediminis (strain HAW-EB3) protein is UDP-3-O-acyl-N-acetylglucosamine deacetylase.